A 491-amino-acid chain; its full sequence is Nicotinamide phosphoribosyltransferase (491 aa).

N-acetylmethionine is present on Met-1. Residue Tyr-188 is modified to Phosphotyrosine. Residue Arg-196 coordinates diphosphate. Asp-219 provides a ligand contact to beta-nicotinamide D-ribonucleotide. Residues His-247 and Arg-311 each coordinate diphosphate. Beta-nicotinamide D-ribonucleotide contacts are provided by residues Arg-311–Asp-313, Gly-353–Asp-354, Gly-384, and Arg-392. Ser-472 is subject to Phosphoserine.

It belongs to the NAPRTase family. As to quaternary structure, homodimer.

Its subcellular location is the nucleus. The protein localises to the cytoplasm. It is found in the secreted. The enzyme catalyses beta-nicotinamide D-ribonucleotide + diphosphate = 5-phospho-alpha-D-ribose 1-diphosphate + nicotinamide + H(+). It participates in cofactor biosynthesis; NAD(+) biosynthesis; nicotinamide D-ribonucleotide from 5-phospho-alpha-D-ribose 1-diphosphate and nicotinamide: step 1/1. Catalyzes the condensation of nicotinamide with 5-phosphoribosyl-1-pyrophosphate to yield nicotinamide mononucleotide, an intermediate in the biosynthesis of NAD. It is the rate limiting component in the mammalian NAD biosynthesis pathway. The secreted form behaves both as a cytokine with immunomodulating properties and an adipokine with anti-diabetic properties, it has no enzymatic activity, partly because of lack of activation by ATP, which has a low level in extracellular space and plasma. Plays a role in the modulation of circadian clock function. Plays a role in the modulation of circadian clock function. NAMPT-dependent oscillatory production of NAD regulates oscillation of clock target gene expression by releasing the core clock component: CLOCK-BMAL1 heterodimer from NAD-dependent SIRT1-mediated suppression. The sequence is that of Nicotinamide phosphoribosyltransferase (NAMPT) from Sus scrofa (Pig).